The chain runs to 807 residues: F-box protein YLR352W (807 aa).

One can recognise an F-box domain in the interval 220 to 266 (LNDCIDLPSHVLWKILKMLPELQKLDLSHTSIDDSTLYHGIPHWKNL). Residues 607-616 (DNNSHVEDSQ) are compositionally biased toward basic and acidic residues. 2 disordered regions span residues 607-647 (DNNS…NPFA) and 716-739 (HLFE…EHSS). 2 stretches are compositionally biased toward polar residues: residues 627 to 644 (SLLS…SSAN) and 723 to 736 (SRSG…LTGE).

In terms of assembly, interacts with SKP1 and CDC53. Component of the probable SCF(YBR352W) complex containing CDC53, SKP1, RBX1 and YBR352W.

It participates in protein modification; protein ubiquitination. Functionally, substrate recognition component of a SCF (SKP1-CUL1-F-box protein) E3 ubiquitin-protein ligase complex which mediates the ubiquitination and subsequent proteasomal degradation of target proteins. Probably recognizes and binds to phosphorylated target proteins. The chain is F-box protein YLR352W from Saccharomyces cerevisiae (strain ATCC 204508 / S288c) (Baker's yeast).